The primary structure comprises 179 residues: Inner membrane-spanning protein YciB (179 aa).

Helical transmembrane passes span 22–42 (IYAA…YSWV), 50–70 (MALI…FFHN), 76–96 (WKVT…QWVM), 121–141 (LAWA…AFWL), and 149–169 (FKVF…GVYI).

It belongs to the YciB family.

Its subcellular location is the cell inner membrane. Functionally, plays a role in cell envelope biogenesis, maintenance of cell envelope integrity and membrane homeostasis. The sequence is that of Inner membrane-spanning protein YciB from Salmonella agona (strain SL483).